A 205-amino-acid polypeptide reads, in one-letter code: Small ribosomal subunit protein uS4 (205 aa).

Residues 1 to 16 show a composition bias toward basic and acidic residues; sequence MSKRESSKYKIDRRMG. Residues 1–46 form a disordered region; sequence MSKRESSKYKIDRRMGENIWGRPKSPVNRREYGPGQHGQRRKGKLS. Residues 94-157 enclose the S4 RNA-binding domain; sequence SRLDAIVYRA…KQLVTVLEAV (64 aa).

The protein belongs to the universal ribosomal protein uS4 family. Part of the 30S ribosomal subunit. Contacts protein S5. The interaction surface between S4 and S5 is involved in control of translational fidelity.

Its function is as follows. One of the primary rRNA binding proteins, it binds directly to 16S rRNA where it nucleates assembly of the body of the 30S subunit. With S5 and S12 plays an important role in translational accuracy. This Rhizobium etli (strain CIAT 652) protein is Small ribosomal subunit protein uS4.